The following is a 121-amino-acid chain: Large ribosomal subunit protein uL18 (121 aa).

Belongs to the universal ribosomal protein uL18 family. In terms of assembly, part of the 50S ribosomal subunit; part of the 5S rRNA/L5/L18/L25 subcomplex. Contacts the 5S and 23S rRNAs.

Functionally, this is one of the proteins that bind and probably mediate the attachment of the 5S RNA into the large ribosomal subunit, where it forms part of the central protuberance. The chain is Large ribosomal subunit protein uL18 from Ureaplasma urealyticum serovar 10 (strain ATCC 33699 / Western).